The chain runs to 301 residues: Probable alpha-L-glutamate ligase 1 (301 aa).

In terms of domain architecture, ATP-grasp spans 104-287 (LQLLSRKGIG…VTEPIVEYIE (184 aa)). ATP is bound by residues K141, 178–179 (EY), D187, and 211–213 (RSN). D248, E260, and N262 together coordinate Mg(2+). Positions 248, 260, and 262 each coordinate Mn(2+).

It belongs to the RimK family. Mg(2+) serves as cofactor. It depends on Mn(2+) as a cofactor.

This chain is Probable alpha-L-glutamate ligase 1, found in Shewanella sp. (strain W3-18-1).